A 198-amino-acid polypeptide reads, in one-letter code: Photosystem I assembly protein Ycf4 (198 aa).

2 helical membrane passes run 35–57 (WFYN…SSYI) and 70–92 (IIFF…FSIN).

Belongs to the Ycf4 family.

Its subcellular location is the plastid. It is found in the chloroplast thylakoid membrane. In terms of biological role, seems to be required for the assembly of the photosystem I complex. This chain is Photosystem I assembly protein Ycf4, found in Euglena gracilis.